Reading from the N-terminus, the 179-residue chain is Ubiquitin-conjugating enzyme E2 C (179 aa).

Residues 1-31 (MASQNVDPAAASSVASRKGQESGTSAARGSV) form a disordered region. The UBC core domain maps to 30–179 (SVGKRLQQEL…YQKQVREKEI (150 aa)). C114 acts as the Glycyl thioester intermediate in catalysis.

Belongs to the ubiquitin-conjugating enzyme family. In terms of assembly, component of the APC/C complex. Autoubiquitinated by the APC/C complex, leading to its degradation by the proteasome.

It carries out the reaction S-ubiquitinyl-[E1 ubiquitin-activating enzyme]-L-cysteine + [E2 ubiquitin-conjugating enzyme]-L-cysteine = [E1 ubiquitin-activating enzyme]-L-cysteine + S-ubiquitinyl-[E2 ubiquitin-conjugating enzyme]-L-cysteine.. The catalysed reaction is S-ubiquitinyl-[E1 ubiquitin-activating enzyme]-L-cysteine + [acceptor protein]-L-lysine = [E1 ubiquitin-activating enzyme]-L-cysteine + N(6)-monoubiquitinyl-[acceptor protein]-L-lysine.. Its pathway is protein modification; protein ubiquitination. Functionally, catalyzes the covalent attachment of ubiquitin to other proteins. Acts as an essential factor of the anaphase promoting complex/cyclosome (APC/C), a cell cycle-regulated ubiquitin ligase that controls progression through mitosis. Acts by initiating 'Lys-11'-linked polyubiquitin chains on APC/C substrates, leading to the degradation of APC/C substrates by the proteasome and promoting mitotic exit. In Xenopus laevis (African clawed frog), this protein is Ubiquitin-conjugating enzyme E2 C (ube2c).